A 430-amino-acid polypeptide reads, in one-letter code: Elongation factor 1-gamma (430 aa).

The 83-residue stretch at 2 to 84 folds into the GST N-terminal domain; that stretch reads VAGKLYTYPE…YVANETLRGS (83 aa). The region spanning 85-213 is the GST C-terminal domain; the sequence is SDLEKAQIIQ…FKLCEKAGEF (129 aa). 2 stretches are compositionally biased toward basic and acidic residues: residues 232-255 and 269-278; these read KTEKAPKAVKAKPEKKEVPKKEQE and PKSKDPFDEM. The interval 232–278 is disordered; the sequence is KTEKAPKAVKAKPEKKEVPKKEQEEPADAAEEALAAEPKSKDPFDEM. The EF-1-gamma C-terminal domain maps to 271–430; the sequence is SKDPFDEMPK…RKFNQGKIFK (160 aa).

EF-1 is composed of four subunits: alpha, beta, delta, and gamma.

Functionally, probably plays a role in anchoring the complex to other cellular components. This is Elongation factor 1-gamma from Artemia salina (Brine shrimp).